The chain runs to 128 residues: Probable heavy metal-dependent transcriptional regulator HI_0293 (128 aa).

The 69-residue stretch at 1–69 (MNISEAAKLV…LHQIAQLLAL (69 aa)) folds into the HTH merR-type domain. The H-T-H motif DNA-binding region spans 4–23 (SEAAKLVGLSTKQIRDYEKM).

The protein localises to the cytoplasm. In terms of biological role, could be a copper-dependent transcriptional activator of the ATPase HI_0290. The chain is Probable heavy metal-dependent transcriptional regulator HI_0293 from Haemophilus influenzae (strain ATCC 51907 / DSM 11121 / KW20 / Rd).